A 158-amino-acid chain; its full sequence is NADH-quinone oxidoreductase subunit B (158 aa).

The [4Fe-4S] cluster site is built by C37, C38, C102, and C132.

It belongs to the complex I 20 kDa subunit family. In terms of assembly, NDH-1 is composed of 14 different subunits. Subunits NuoB, C, D, E, F, and G constitute the peripheral sector of the complex. It depends on [4Fe-4S] cluster as a cofactor.

It is found in the cell inner membrane. The enzyme catalyses a quinone + NADH + 5 H(+)(in) = a quinol + NAD(+) + 4 H(+)(out). In terms of biological role, NDH-1 shuttles electrons from NADH, via FMN and iron-sulfur (Fe-S) centers, to quinones in the respiratory chain. Couples the redox reaction to proton translocation (for every two electrons transferred, four hydrogen ions are translocated across the cytoplasmic membrane), and thus conserves the redox energy in a proton gradient. This Aromatoleum aromaticum (strain DSM 19018 / LMG 30748 / EbN1) (Azoarcus sp. (strain EbN1)) protein is NADH-quinone oxidoreductase subunit B.